We begin with the raw amino-acid sequence, 235 residues long: Segregation and condensation protein A (235 aa).

The protein belongs to the ScpA family. Component of a cohesin-like complex composed of ScpA, ScpB and the Smc homodimer, in which ScpA and ScpB bind to the head domain of Smc. The presence of the three proteins is required for the association of the complex with DNA.

The protein localises to the cytoplasm. Participates in chromosomal partition during cell division. May act via the formation of a condensin-like complex containing Smc and ScpB that pull DNA away from mid-cell into both cell halves. In Streptococcus equi subsp. zooepidemicus (strain H70), this protein is Segregation and condensation protein A.